A 365-amino-acid polypeptide reads, in one-letter code: 1-acyl-sn-glycerol-3-phosphate acyltransferase epsilon (365 aa).

A helical transmembrane segment spans residues Leu15–Trp35. Residues His93–Asp98 carry the HXXXXD motif motif. Residues Leu345–Ala365 traverse the membrane as a helical segment.

It belongs to the 1-acyl-sn-glycerol-3-phosphate acyltransferase family. Widely expressed.

It is found in the endoplasmic reticulum membrane. Its subcellular location is the nucleus envelope. It localises to the mitochondrion. The catalysed reaction is a 1-acyl-sn-glycero-3-phosphate + an acyl-CoA = a 1,2-diacyl-sn-glycero-3-phosphate + CoA. It carries out the reaction 1-(9Z-octadecenoyl)-sn-glycero-3-phosphate + tetradecanoyl-CoA = 1-(9Z)-octadecenoyl-2-tetradecanoyl-sn-glycero-3-phosphate + CoA. It catalyses the reaction pentadecanoyl-CoA + 1-(9Z-octadecenoyl)-sn-glycero-3-phosphate = 1-(9Z)-octadecenoyl-2-pentadecanoyl-sn-glycero-3-phosphate + CoA. The enzyme catalyses 1-(9Z-octadecenoyl)-sn-glycero-3-phosphate + octadecanoyl-CoA = 1-(9Z-octadecenoyl)-2-octadecanoyl-sn-glycero-3-phosphate + CoA. The catalysed reaction is nonadecanoyl-CoA + 1-(9Z-octadecenoyl)-sn-glycero-3-phosphate = 1-(9Z)-octadecenoyl-2-nonadecanoyl-sn-glycero-3-phosphate + CoA. It carries out the reaction 1-(9Z-octadecenoyl)-sn-glycero-3-phosphoethanolamine + (9Z)-octadecenoyl-CoA = 1,2-di-(9Z-octadecenoyl)-sn-glycero-3-phosphoethanolamine + CoA. It catalyses the reaction 1-(9Z-octadecenoyl)-sn-glycero-3-phosphocholine + (9Z)-octadecenoyl-CoA = 1,2-di-(9Z-octadecenoyl)-sn-glycero-3-phosphocholine + CoA. The enzyme catalyses 1-(9Z-octadecenoyl)-sn-glycero-3-phospho-(1D-myo-inositol) + (5Z,8Z,11Z,14Z)-eicosatetraenoyl-CoA = 1-(9Z-octadecenoyl)-2-(5Z,8Z,11Z,14Z-eicosatetraenoyl)-sn-glycero-3-phospho-1D-myo-inositol + CoA. The catalysed reaction is 1-(9Z-octadecenoyl)-sn-glycero-3-phospho-L-serine + (9Z)-octadecenoyl-CoA = 1,2-di-(9Z)-octadecenoyl-sn-glycero-3-phospho-L-serine + CoA. It carries out the reaction 1-(9Z-octadecenoyl)-sn-glycero-3-phospho-L-serine + (5Z,8Z,11Z,14Z)-eicosatetraenoyl-CoA = 1-(9Z-octadecenoyl)-2-(5Z,8Z,11Z,14Z-eicosatetraenoyl)-sn-glycero-3-phospho-L-serine + CoA. It catalyses the reaction 1-hexadecanoyl-sn-glycero-3-phosphate + (9Z)-octadecenoyl-CoA = 1-hexadecanoyl-2-(9Z-octadecenoyl)-sn-glycero-3-phosphate + CoA. The enzyme catalyses 1-heptadecanoyl-sn-glycero-3-phosphate + (9Z)-octadecenoyl-CoA = 1-heptadecanoyl-2-(9Z)-octadecenoyl-sn-glycero-3-phosphate + CoA. The catalysed reaction is 1-(5Z,8Z,11Z,14Z-eicosatetraenoyl)-sn-glycero-3-phosphate + (9Z)-octadecenoyl-CoA = 1-(5Z,8Z,11Z,14Z)-eicosatetraenoyl-2-(9Z)-octadecenoyl-sn-glycero-3-phosphate + CoA. It carries out the reaction 1-octadecanoyl-sn-glycero-3-phosphate + (9Z)-octadecenoyl-CoA = 1-octadecanoyl-2-(9Z-octadecenoyl)-sn-glycero-3-phosphate + CoA. It catalyses the reaction 1-(9Z-octadecenoyl)-sn-glycero-3-phosphate + (5Z,8Z,11Z,14Z)-eicosatetraenoyl-CoA = 1-(9Z)-octadecenoyl-2-(5Z,8Z,11Z,14Z)-eicosatetraenoyl-sn-glycero-3-phosphate + CoA. The enzyme catalyses heptadecanoyl-CoA + 1-(9Z-octadecenoyl)-sn-glycero-3-phosphate = 1-(9Z)-octadecenoyl-2-heptadecanoyl-sn-glycero-3-phosphate + CoA. The catalysed reaction is 1-(9Z-octadecenoyl)-sn-glycero-3-phosphocholine + (5Z,8Z,11Z,14Z)-eicosatetraenoyl-CoA = 1-(9Z)-octadecenoyl-2-(5Z,8Z,11Z,14Z)-icosatetraenoyl-sn-glycero-3-phosphocholine + CoA. It carries out the reaction 1-(9Z-octadecenoyl)-sn-glycero-3-phosphate + (9Z)-octadecenoyl-CoA = 1,2-di-(9Z-octadecenoyl)-sn-glycero-3-phosphate + CoA. It catalyses the reaction 1-(9Z-octadecenoyl)-sn-glycero-3-phosphate + hexadecanoyl-CoA = 1-hexadecanoyl-2-(9Z-octadecenoyl)-sn-glycero-3-phosphate + CoA. The protein operates within phospholipid metabolism; CDP-diacylglycerol biosynthesis; CDP-diacylglycerol from sn-glycerol 3-phosphate: step 2/3. In terms of biological role, converts 1-acyl-sn-glycerol-3-phosphate (lysophosphatidic acid or LPA) into 1,2-diacyl-sn-glycerol-3-phosphate (phosphatidic acid or PA) by incorporating an acyl moiety at the sn-2 position of the glycerol backbone. Acts on LPA containing saturated or unsaturated fatty acids C15:0-C20:4 at the sn-1 position using C18:1-CoA as the acyl donor. Also acts on lysophosphatidylethanolamine using oleoyl-CoA, but not arachidonoyl-CoA, and lysophosphatidylinositol using arachidonoyl-CoA, but not oleoyl-CoA. Activity toward lysophosphatidylglycerol not detectable. The sequence is that of 1-acyl-sn-glycerol-3-phosphate acyltransferase epsilon (Agpat5) from Mus musculus (Mouse).